The sequence spans 1424 residues: ABC multidrug transporter H (1424 aa).

A disordered region spans residues methionine 1–aspartate 49. The span at serine 23 to serine 42 shows a compositional bias: polar residues. Asparagine 79 and asparagine 275 each carry an N-linked (GlcNAc...) asparagine glycan. The ABC transporter 1 domain maps to leucine 96–glutamate 351. The next 7 helical transmembrane spans lie at glycine 488–methionine 508, valine 520–isoleucine 540, isoleucine 544–leucine 564, glycine 569–phenylalanine 589, valine 605–alanine 625, tryptophan 629–isoleucine 649, and asparagine 710–serine 730. The segment at glutamate 760–asparagine 782 is disordered. N-linked (GlcNAc...) asparagine glycosylation is found at asparagine 790 and asparagine 798. In terms of domain architecture, ABC transporter 2 spans phenylalanine 794 to alanine 1037. Glycine 830–threonine 837 provides a ligand contact to ATP. A run of 4 helical transmembrane segments spans residues isoleucine 1131 to serine 1151, threonine 1161 to isoleucine 1181, valine 1200 to leucine 1220, and alanine 1240 to alanine 1260. N-linked (GlcNAc...) asparagine glycosylation is present at asparagine 1265. 2 helical membrane passes run phenylalanine 1268 to valine 1288 and tryptophan 1300 to phenylalanine 1320. Asparagine 1338 is a glycosylation site (N-linked (GlcNAc...) asparagine). The helical transmembrane segment at threonine 1395–leucine 1415 threads the bilayer.

The protein belongs to the ABC transporter superfamily. ABCG family. PDR (TC 3.A.1.205) subfamily.

The protein resides in the cell membrane. Its activity is regulated as follows. The efflux inhibitor FK506 impairs the transport activity. ABC efflux transporter that is able to transport rhodamine 6G (R-6G), a known substrate for many ABC transporters, but seems not to transport azoles. This chain is ABC multidrug transporter H, found in Aspergillus fumigatus (strain ATCC MYA-4609 / CBS 101355 / FGSC A1100 / Af293) (Neosartorya fumigata).